Here is a 413-residue protein sequence, read N- to C-terminus: MASEDEVSEFLGQNPETAAWLERVRGQCESDKLWRYRREFILRNLSDVCGEGEIPPPPETNHKELDRLLAYSMVWANHVFTGCRYPIQVIEKVLKMAENIKVTDAPTHTTRDELVAKVKKRGNSSSNEGVEELPRKKKKSNDHGARESSYIDDTVEIRNQPGDARERSSGKICDGYIPSTSLNKREAHSRTDVNTEFYEESGNGRPLPVSKAKSSLNPPEEAGYKHAATQGRKSHSDSRYQTAVKGPSQSSDNALKPTRRFTTEHTKERQPFFNRLYKTVAWKLVSAGGFNANLNHEELLNTSIESLKATLEIAFVPLKDLADFPQNKTSQENTVCELRCKSVYLGMGCGKTMDTAKAVAFREAVKLFLKKKVVVRICRRKFNGRDVEDLVLVDEEFRPPNLPPAVKNPHELV.

The XRN2-binding (XTBD) domain maps to 21-118; the sequence is LERVRGQCES…TTRDELVAKV (98 aa). The disordered stretch occupies residues 118–266; it reads VKKRGNSSSN…PTRRFTTEHT (149 aa). Positions 183-193 are enriched in basic and acidic residues; it reads NKREAHSRTDV.

This sequence belongs to the CARF family.

The protein localises to the nucleus. It is found in the nucleoplasm. Functionally, may regulate DNA damage response and cell proliferation. The protein is Protein CDKN2AIP homolog B (cdkn2aip-b) of Xenopus laevis (African clawed frog).